Consider the following 534-residue polypeptide: CTP synthase (534 aa).

The tract at residues 1 to 267 is amidoligase domain; the sequence is MTKYIFVTGG…DQIVCDHLKL (267 aa). Position 13 (S13) interacts with CTP. S13 lines the UTP pocket. 14-19 lines the ATP pocket; that stretch reads SIGKGI. Y54 serves as a coordination point for L-glutamine. ATP is bound at residue D71. Mg(2+) is bound by residues D71 and E141. CTP-binding positions include 148 to 150, 188 to 193, and K224; these read DIE and KTKPTQ. Residues 188–193 and K224 contribute to the UTP site; that span reads KTKPTQ. Positions 292-534 constitute a Glutamine amidotransferase type-1 domain; the sequence is KIALVGKYVE…FVTAAVENAK (243 aa). G354 contacts L-glutamine. Residue C381 is the Nucleophile; for glutamine hydrolysis of the active site. Residues 382 to 385, E405, and R463 each bind L-glutamine; that span reads LGMQ. Active-site residues include H508 and E510.

Belongs to the CTP synthase family. As to quaternary structure, homotetramer.

The enzyme catalyses UTP + L-glutamine + ATP + H2O = CTP + L-glutamate + ADP + phosphate + 2 H(+). It catalyses the reaction L-glutamine + H2O = L-glutamate + NH4(+). It carries out the reaction UTP + NH4(+) + ATP = CTP + ADP + phosphate + 2 H(+). The protein operates within pyrimidine metabolism; CTP biosynthesis via de novo pathway; CTP from UDP: step 2/2. Its activity is regulated as follows. Allosterically activated by GTP, when glutamine is the substrate; GTP has no effect on the reaction when ammonia is the substrate. The allosteric effector GTP functions by stabilizing the protein conformation that binds the tetrahedral intermediate(s) formed during glutamine hydrolysis. Inhibited by the product CTP, via allosteric rather than competitive inhibition. In terms of biological role, catalyzes the ATP-dependent amination of UTP to CTP with either L-glutamine or ammonia as the source of nitrogen. Regulates intracellular CTP levels through interactions with the four ribonucleotide triphosphates. The chain is CTP synthase from Streptococcus thermophilus (strain CNRZ 1066).